The primary structure comprises 77 residues: Sec-independent protein translocase protein TatA (77 aa).

The helical transmembrane segment at Met1–Gly21 threads the bilayer. The span at Gly42 to Glu60 shows a compositional bias: basic and acidic residues. The tract at residues Gly42–Val77 is disordered.

This sequence belongs to the TatA/E family. In terms of assembly, the Tat system comprises two distinct complexes: a TatABC complex, containing multiple copies of TatA, TatB and TatC subunits, and a separate TatA complex, containing only TatA subunits. Substrates initially bind to the TatABC complex, which probably triggers association of the separate TatA complex to form the active translocon.

It is found in the cell inner membrane. Its function is as follows. Part of the twin-arginine translocation (Tat) system that transports large folded proteins containing a characteristic twin-arginine motif in their signal peptide across membranes. TatA could form the protein-conducting channel of the Tat system. The protein is Sec-independent protein translocase protein TatA of Bradyrhizobium diazoefficiens (strain JCM 10833 / BCRC 13528 / IAM 13628 / NBRC 14792 / USDA 110).